The sequence spans 279 residues: Tryptophan synthase alpha chain (279 aa).

Residues E50 and D61 each act as proton acceptor in the active site.

The protein belongs to the TrpA family. In terms of assembly, tetramer of two alpha and two beta chains.

It carries out the reaction (1S,2R)-1-C-(indol-3-yl)glycerol 3-phosphate + L-serine = D-glyceraldehyde 3-phosphate + L-tryptophan + H2O. The protein operates within amino-acid biosynthesis; L-tryptophan biosynthesis; L-tryptophan from chorismate: step 5/5. In terms of biological role, the alpha subunit is responsible for the aldol cleavage of indoleglycerol phosphate to indole and glyceraldehyde 3-phosphate. In Allorhizobium ampelinum (strain ATCC BAA-846 / DSM 112012 / S4) (Agrobacterium vitis (strain S4)), this protein is Tryptophan synthase alpha chain.